The following is a 1071-amino-acid chain: V-type proton ATPase catalytic subunit A (1071 aa).

An N-acetylalanine modification is found at Ala2. Phosphothreonine is present on Thr131. Position 257–264 (257–264 (GAFGCGKT)) interacts with ATP. Residues 494-642 (LLGLWIGDGL…LVSLARSLGL (149 aa)) form the DOD-type homing endonuclease domain. 2 positions are modified to phosphoserine: Ser858 and Ser928.

This sequence belongs to the ATPase alpha/beta chains family. In terms of assembly, V-ATPase is a heteromultimeric enzyme composed of a peripheral catalytic V1 complex (components A to H) attached to an integral membrane V0 proton pore complex (components: a, c, c', c'', d, e, f and VOA1). Interacts with RAV1 and RAV2 components of the RAVE complex, which are essential for the stability and assembly of V-ATPase. Post-translationally, this protein undergoes a protein self splicing that involves a post-translational excision of the VDE intervening region (intein) followed by peptide ligation.

The protein resides in the vacuole membrane. It carries out the reaction ATP + H2O + 4 H(+)(in) = ADP + phosphate + 5 H(+)(out). Functionally, catalytic subunit of the V1 complex of vacuolar(H+)-ATPase (V-ATPase), a multisubunit enzyme composed of a peripheral complex (V1) that hydrolyzes ATP and a membrane integral complex (V0) that translocates protons. V-ATPase is responsible for acidifying and maintaining the pH of intracellular compartments. In terms of biological role, PI-SceI is an endonuclease that can cleave at a site present in a VMA1 allele that lacks the derived endonuclease segment of the open reading frame; cleavage at this site only occurs during meiosis and initiates 'homing', a genetic event that converts a VMA1 allele lacking VDE into one that contains it. The sequence is that of V-type proton ATPase catalytic subunit A from Saccharomyces cerevisiae (strain ATCC 204508 / S288c) (Baker's yeast).